The sequence spans 215 residues: Adenylate kinase (215 aa).

G10–T15 is a binding site for ATP. The tract at residues S30–V59 is NMP. Residues T31, R36, G57–V59, G85–R88, and Q92 contribute to the AMP site. Residues G122–D159 form an LID region. Residues R123 and T132–Y133 contribute to the ATP site. The AMP site is built by R156 and R167. Q200 is an ATP binding site.

The protein belongs to the adenylate kinase family. As to quaternary structure, monomer.

The protein resides in the cytoplasm. It carries out the reaction AMP + ATP = 2 ADP. It participates in purine metabolism; AMP biosynthesis via salvage pathway; AMP from ADP: step 1/1. Functionally, catalyzes the reversible transfer of the terminal phosphate group between ATP and AMP. Plays an important role in cellular energy homeostasis and in adenine nucleotide metabolism. The sequence is that of Adenylate kinase from Neisseria meningitidis serogroup B (strain ATCC BAA-335 / MC58).